We begin with the raw amino-acid sequence, 212 residues long: Uracil phosphoribosyltransferase (212 aa).

5-phospho-alpha-D-ribose 1-diphosphate contacts are provided by residues Arg78, Arg103, and 130–138 (DPMLATGGS). Residues Ile193 and 198–200 (GDA) each bind uracil. 5-phospho-alpha-D-ribose 1-diphosphate is bound at residue Asp199.

This sequence belongs to the UPRTase family. Mg(2+) is required as a cofactor.

The enzyme catalyses UMP + diphosphate = 5-phospho-alpha-D-ribose 1-diphosphate + uracil. Its pathway is pyrimidine metabolism; UMP biosynthesis via salvage pathway; UMP from uracil: step 1/1. Its activity is regulated as follows. Allosterically activated by GTP. Functionally, catalyzes the conversion of uracil and 5-phospho-alpha-D-ribose 1-diphosphate (PRPP) to UMP and diphosphate. In Stutzerimonas stutzeri (strain A1501) (Pseudomonas stutzeri), this protein is Uracil phosphoribosyltransferase.